A 288-amino-acid polypeptide reads, in one-letter code: 33 kDa chaperonin (288 aa).

Disulfide bonds link Cys236–Cys238 and Cys269–Cys272.

The protein belongs to the HSP33 family. Post-translationally, under oxidizing conditions two disulfide bonds are formed involving the reactive cysteines. Under reducing conditions zinc is bound to the reactive cysteines and the protein is inactive.

Its subcellular location is the cytoplasm. Redox regulated molecular chaperone. Protects both thermally unfolding and oxidatively damaged proteins from irreversible aggregation. Plays an important role in the bacterial defense system toward oxidative stress. The polypeptide is 33 kDa chaperonin (Lactococcus lactis subsp. cremoris (strain MG1363)).